A 90-amino-acid polypeptide reads, in one-letter code: Major envelope protein (90 aa).

Residues 53-70 (AVSVVSWAVAAGLIGELI) traverse the membrane as a helical segment.

The protein localises to the virion membrane. Its function is as follows. Essential for membrane formation. This chain is Major envelope protein (P9), found in Pseudomonas savastanoi pv. phaseolicola (Pseudomonas syringae pv. phaseolicola).